The primary structure comprises 190 residues: RNA pyrophosphohydrolase (190 aa).

The 144-residue stretch at 6-149 (GYRPNVGIIL…KRDVYTQALN (144 aa)) folds into the Nudix hydrolase domain. Positions 38 to 59 (GGIKYGESPVQAMYRELHEEVG) match the Nudix box motif. Residues 167-190 (QRVHGPRSTDSPSSETDGHAHIAG) form a disordered region.

The protein belongs to the Nudix hydrolase family. RppH subfamily. It depends on a divalent metal cation as a cofactor.

Accelerates the degradation of transcripts by removing pyrophosphate from the 5'-end of triphosphorylated RNA, leading to a more labile monophosphorylated state that can stimulate subsequent ribonuclease cleavage. The protein is RNA pyrophosphohydrolase of Bordetella pertussis (strain Tohama I / ATCC BAA-589 / NCTC 13251).